Here is a 224-residue protein sequence, read N- to C-terminus: Ribonuclease T (224 aa).

Over residues 1–11 (MSEDLYEDDLD) the composition is skewed to acidic residues. The segment at 1-22 (MSEDLYEDDLDTQGSSGPRHPM) is disordered. The Exonuclease domain maps to 32–206 (VVVDVETGGF…YDTEKTAELF (175 aa)). Residues D35, E37, H193, and D198 each coordinate Mg(2+). H193 functions as the Proton donor/acceptor in the catalytic mechanism.

The protein belongs to the RNase T family. As to quaternary structure, homodimer. It depends on Mg(2+) as a cofactor.

Its function is as follows. Trims short 3' overhangs of a variety of RNA species, leaving a one or two nucleotide 3' overhang. Responsible for the end-turnover of tRNA: specifically removes the terminal AMP residue from uncharged tRNA (tRNA-C-C-A). Also appears to be involved in tRNA biosynthesis. The chain is Ribonuclease T from Pseudomonas putida (strain ATCC 700007 / DSM 6899 / JCM 31910 / BCRC 17059 / LMG 24140 / F1).